Here is a 355-residue protein sequence, read N- to C-terminus: Molybdenum import ATP-binding protein ModC (355 aa).

The ABC transporter domain maps to 1-233 (MTLIVEAKQR…PSTASDRREA (233 aa)). 31-38 (GRSGSGKT) is a binding site for ATP. The 65-residue stretch at 291–355 (GLSALNILEA…AIIKTVALEA (65 aa)) folds into the Mop domain.

It belongs to the ABC transporter superfamily. Molybdate importer (TC 3.A.1.8) family. In terms of assembly, the complex is composed of two ATP-binding proteins (ModC), two transmembrane proteins (ModB) and a solute-binding protein (ModA).

The protein localises to the cell inner membrane. The enzyme catalyses molybdate(out) + ATP + H2O = molybdate(in) + ADP + phosphate + H(+). Part of the ABC transporter complex ModABC involved in molybdenum import. Responsible for energy coupling to the transport system. This Rhizobium johnstonii (strain DSM 114642 / LMG 32736 / 3841) (Rhizobium leguminosarum bv. viciae) protein is Molybdenum import ATP-binding protein ModC.